A 756-amino-acid polypeptide reads, in one-letter code: 5-methyltetrahydropteroyltriglutamate--homocysteine methyltransferase (756 aa).

Residues Arg16–Lys19 and Lys112 each bind 5-methyltetrahydropteroyltri-L-glutamate. L-homocysteine-binding positions include Ile432–Ser434 and Glu485. L-methionine contacts are provided by residues Ile432–Ser434 and Glu485. 5-methyltetrahydropteroyltri-L-glutamate is bound by residues Arg516–Cys517 and Trp562. Asp600 contacts L-homocysteine. Asp600 lines the L-methionine pocket. Residue Glu606 participates in 5-methyltetrahydropteroyltri-L-glutamate binding. His642, Cys644, and Glu666 together coordinate Zn(2+). His695 acts as the Proton donor in catalysis. Zn(2+) is bound at residue Cys727.

It belongs to the vitamin-B12 independent methionine synthase family. The cofactor is Zn(2+).

It catalyses the reaction 5-methyltetrahydropteroyltri-L-glutamate + L-homocysteine = tetrahydropteroyltri-L-glutamate + L-methionine. It participates in amino-acid biosynthesis; L-methionine biosynthesis via de novo pathway; L-methionine from L-homocysteine (MetE route): step 1/1. Catalyzes the transfer of a methyl group from 5-methyltetrahydrofolate to homocysteine resulting in methionine formation. This chain is 5-methyltetrahydropteroyltriglutamate--homocysteine methyltransferase, found in Haemophilus influenzae (strain PittEE).